A 272-amino-acid chain; its full sequence is Tryptophan synthase alpha chain (272 aa).

Residues glutamate 49 and aspartate 60 each act as proton acceptor in the active site.

This sequence belongs to the TrpA family. Tetramer of two alpha and two beta chains.

The enzyme catalyses (1S,2R)-1-C-(indol-3-yl)glycerol 3-phosphate + L-serine = D-glyceraldehyde 3-phosphate + L-tryptophan + H2O. The protein operates within amino-acid biosynthesis; L-tryptophan biosynthesis; L-tryptophan from chorismate: step 5/5. The alpha subunit is responsible for the aldol cleavage of indoleglycerol phosphate to indole and glyceraldehyde 3-phosphate. The polypeptide is Tryptophan synthase alpha chain (Polaromonas sp. (strain JS666 / ATCC BAA-500)).